Here is a 237-residue protein sequence, read N- to C-terminus: Octopine transport system permease protein OccQ (237 aa).

The ABC transmembrane type-1 domain maps to 22-222 (TGMTVAVASS…LITFISGQAF (201 aa)). 4 consecutive transmembrane segments (helical) span residues 24 to 44 (MTVA…CLGA), 72 to 92 (LVIY…GSLF), 96 to 116 (GFVS…VSAA), and 201 to 221 (FSFY…SGQA).

This sequence belongs to the binding-protein-dependent transport system permease family. HisMQ subfamily.

The protein localises to the cell inner membrane. Its function is as follows. Component of the octopine active transport system probably consisting of four subunits: Q, M, P and T. The protein is Octopine transport system permease protein OccQ (occQ) of Rhizobium meliloti (Ensifer meliloti).